The primary structure comprises 284 residues: Bifunctional protein FolD 2 (284 aa).

NADP(+) contacts are provided by residues 165–167 (GRG), T192, and V233.

The protein belongs to the tetrahydrofolate dehydrogenase/cyclohydrolase family. As to quaternary structure, homodimer.

The enzyme catalyses (6R)-5,10-methylene-5,6,7,8-tetrahydrofolate + NADP(+) = (6R)-5,10-methenyltetrahydrofolate + NADPH. It catalyses the reaction (6R)-5,10-methenyltetrahydrofolate + H2O = (6R)-10-formyltetrahydrofolate + H(+). It participates in one-carbon metabolism; tetrahydrofolate interconversion. Its function is as follows. Catalyzes the oxidation of 5,10-methylenetetrahydrofolate to 5,10-methenyltetrahydrofolate and then the hydrolysis of 5,10-methenyltetrahydrofolate to 10-formyltetrahydrofolate. The chain is Bifunctional protein FolD 2 from Streptomyces avermitilis (strain ATCC 31267 / DSM 46492 / JCM 5070 / NBRC 14893 / NCIMB 12804 / NRRL 8165 / MA-4680).